Reading from the N-terminus, the 189-residue chain is Probable nicotinate-nucleotide adenylyltransferase (189 aa).

It belongs to the NadD family.

The catalysed reaction is nicotinate beta-D-ribonucleotide + ATP + H(+) = deamido-NAD(+) + diphosphate. Its pathway is cofactor biosynthesis; NAD(+) biosynthesis; deamido-NAD(+) from nicotinate D-ribonucleotide: step 1/1. Its function is as follows. Catalyzes the reversible adenylation of nicotinate mononucleotide (NaMN) to nicotinic acid adenine dinucleotide (NaAD). The chain is Probable nicotinate-nucleotide adenylyltransferase from Bacillus licheniformis (strain ATCC 14580 / DSM 13 / JCM 2505 / CCUG 7422 / NBRC 12200 / NCIMB 9375 / NCTC 10341 / NRRL NRS-1264 / Gibson 46).